We begin with the raw amino-acid sequence, 465 residues long: Argininosuccinate lyase (465 aa).

It belongs to the lyase 1 family. Argininosuccinate lyase subfamily.

Its subcellular location is the cytoplasm. The enzyme catalyses 2-(N(omega)-L-arginino)succinate = fumarate + L-arginine. The protein operates within amino-acid biosynthesis; L-arginine biosynthesis; L-arginine from L-ornithine and carbamoyl phosphate: step 3/3. This chain is Argininosuccinate lyase, found in Methylococcus capsulatus (strain ATCC 33009 / NCIMB 11132 / Bath).